The sequence spans 453 residues: Acyl-coenzyme A thioesterase 2, mitochondrial (453 aa).

The N-terminal 42 residues, 1-42, are a transit peptide targeting the mitochondrion; it reads MVASSFAVLRASRLCQWGWKSWTQLSGPPPLSTGGRTTFART. An N6-acetyllysine modification is found at Lys83. Residues Ser273, Asp365, and His399 each act as charge relay system in the active site. Residue Lys447 is modified to N6-succinyllysine.

This sequence belongs to the C/M/P thioester hydrolase family. Monomer. In terms of processing, the N-terminus is blocked. Constitutively expressed in heart and brown fat. Strongly induced in liver, and weakly in kidney, in peroxisome proliferator treated rat.

Its subcellular location is the mitochondrion matrix. The enzyme catalyses hexadecanoyl-CoA + H2O = hexadecanoate + CoA + H(+). It carries out the reaction tetradecanoyl-CoA + H2O = tetradecanoate + CoA + H(+). It catalyses the reaction octadecanoyl-CoA + H2O = octadecanoate + CoA + H(+). The catalysed reaction is eicosanoyl-CoA + H2O = eicosanoate + CoA + H(+). The enzyme catalyses decanoyl-CoA + H2O = decanoate + CoA + H(+). It carries out the reaction dodecanoyl-CoA + H2O = dodecanoate + CoA + H(+). It catalyses the reaction (9Z)-octadecenoyl-CoA + H2O = (9Z)-octadecenoate + CoA + H(+). The catalysed reaction is (9Z)-hexadecenoyl-CoA + H2O = (9Z)-hexadecenoate + CoA + H(+). The enzyme catalyses (9E)-octadecenoyl-CoA + H2O = (9E)-octadecenoate + CoA + H(+). It carries out the reaction (9Z,12Z)-octadecadienoyl-CoA + H2O = (9Z,12Z)-octadecadienoate + CoA + H(+). The protein operates within lipid metabolism; fatty acid metabolism. Catalyzes the hydrolysis of acyl-CoAs into free fatty acids and coenzyme A (CoASH), regulating their respective intracellular levels. Displays higher activity toward long chain acyl CoAs (C14-C20). The enzyme is involved in enhancing the hepatic fatty acid oxidation in mitochondria. This Rattus norvegicus (Rat) protein is Acyl-coenzyme A thioesterase 2, mitochondrial (Acot2).